Here is a 206-residue protein sequence, read N- to C-terminus: Dual specificity phosphatase 29 (206 aa).

One can recognise a Tyrosine-protein phosphatase domain in the interval 47 to 194 (HVNQVWPSVY…LRALDITLQE (148 aa)). Substrate is bound at residue 138–145 (HCVMGRSR). The active-site Phosphocysteine intermediate is the cysteine 139.

Belongs to the protein-tyrosine phosphatase family. Non-receptor class dual specificity subfamily.

It is found in the cytoplasm. Its subcellular location is the nucleus. The catalysed reaction is O-phospho-L-tyrosyl-[protein] + H2O = L-tyrosyl-[protein] + phosphate. It catalyses the reaction O-phospho-L-seryl-[protein] + H2O = L-seryl-[protein] + phosphate. It carries out the reaction O-phospho-L-threonyl-[protein] + H2O = L-threonyl-[protein] + phosphate. Functionally, dual specificity phosphatase able to dephosphorylate phosphotyrosine, phosphoserine and phosphothreonine residues within the same substrate, with a preference for phosphotyrosine as a substrate. Involved in the modulation of AMPK and MAPK1/2 signaling pathways. The polypeptide is Dual specificity phosphatase 29 (dusp29) (Gasterosteus aculeatus (Three-spined stickleback)).